The chain runs to 310 residues: HTH-type transcriptional regulator PunR (310 aa).

The HTH lysR-type domain maps to 2 to 59; sequence WSEYSLEVVDAVARNGSFSAAAQELHRVPSAVSYTVRQLEEWLAVPLFERRHRDVELT. The H-T-H motif DNA-binding region spans 19–38; it reads FSAAAQELHRVPSAVSYTVR.

Belongs to the LysR transcriptional regulatory family.

It localises to the cytoplasm. In terms of biological role, transcriptional regulator that activates the expression of punC, which encodes a purine nucleoside transporter. This Escherichia coli O157:H7 protein is HTH-type transcriptional regulator PunR.